The sequence spans 206 residues: Recombination protein RecR (206 aa).

Residues 58-73 (CENCHNISDVAVCEIC) form a C4-type zinc finger. The Toprim domain maps to 81–176 (QIVCVVEDVR…ITSSIARGIS (96 aa)).

The protein belongs to the RecR family.

May play a role in DNA repair. It seems to be involved in an RecBC-independent recombinational process of DNA repair. It may act with RecF and RecO. The sequence is that of Recombination protein RecR from Flavobacterium psychrophilum (strain ATCC 49511 / DSM 21280 / CIP 103535 / JIP02/86).